A 531-amino-acid polypeptide reads, in one-letter code: Aspartate--tRNA ligase, cytoplasmic (531 aa).

Residues 1–45 (MADAAEGEQPKLSKKELNKLARKAKKDEKAGEKGGNQQQAAAMDQ) are disordered. A compositionally biased stretch (basic and acidic residues) spans 8 to 32 (EQPKLSKKELNKLARKAKKDEKAGE). E259 contacts L-aspartate. The aspartate stretch occupies residues 281 to 284 (QLYK). L-aspartate is bound at residue R303. ATP-binding positions include 303-305 (RAE), 311-313 (RHM), and E454. 2 residues coordinate L-aspartate: S457 and R461. Residue 502–505 (GLER) participates in ATP binding.

It belongs to the class-II aminoacyl-tRNA synthetase family. Type 2 subfamily. As to quaternary structure, homodimer.

Its subcellular location is the cytoplasm. It carries out the reaction tRNA(Asp) + L-aspartate + ATP = L-aspartyl-tRNA(Asp) + AMP + diphosphate. This chain is Aspartate--tRNA ligase, cytoplasmic, found in Caenorhabditis elegans.